Here is a 124-residue protein sequence, read N- to C-terminus: Histone H2B, embryonic (124 aa).

Positions 1-31 (MAPTAQVAKKGSKKAVKGTKTAXGGKKRNRK) are disordered. O-linked (GlcNAc) serine glycosylation is present at Ser-111. Residue Lys-119 forms a Glycyl lysine isopeptide (Lys-Gly) (interchain with G-Cter in ubiquitin) linkage.

This sequence belongs to the histone H2B family. In terms of assembly, the nucleosome is a histone octamer containing two molecules each of H2A, H2B, H3 and H4 assembled in one H3-H4 heterotetramer and two H2A-H2B heterodimers. The octamer wraps approximately 147 bp of DNA. Monoubiquitination of Lys-119 gives a specific tag for epigenetic transcriptional activation and is also prerequisite for histone H3 'Lys-4' and 'Lys-79' methylation. Post-translationally, glcNAcylation at Ser-111 promotes monoubiquitination of Lys-119. It fluctuates in response to extracellular glucose, and associates with transcribed genes.

The protein localises to the nucleus. It is found in the chromosome. Functionally, core component of nucleosome. Nucleosomes wrap and compact DNA into chromatin, limiting DNA accessibility to the cellular machineries which require DNA as a template. Histones thereby play a central role in transcription regulation, DNA repair, DNA replication and chromosomal stability. DNA accessibility is regulated via a complex set of post-translational modifications of histones, also called histone code, and nucleosome remodeling. In Strongylocentrotus purpuratus (Purple sea urchin), this protein is Histone H2B, embryonic.